Consider the following 334-residue polypeptide: Ketol-acid reductoisomerase (NADP(+)) (334 aa).

A KARI N-terminal Rossmann domain is found at 2 to 182; sequence PKMYYEKDTD…GGARAGVLET (181 aa). Residues 25–28, Ser51, Ser53, and 83–86 each bind NADP(+); these read YGSQ and DEKQ. The active site involves His108. NADP(+) is bound at residue Gly134. One can recognise a KARI C-terminal knotted domain in the interval 183 to 328; that stretch reads TFKDETETDL…KELRGMMSWI (146 aa). The Mg(2+) site is built by Asp191, Glu195, Glu227, and Glu231. Ser252 contributes to the substrate binding site.

The protein belongs to the ketol-acid reductoisomerase family. The cofactor is Mg(2+).

The catalysed reaction is (2R)-2,3-dihydroxy-3-methylbutanoate + NADP(+) = (2S)-2-acetolactate + NADPH + H(+). The enzyme catalyses (2R,3R)-2,3-dihydroxy-3-methylpentanoate + NADP(+) = (S)-2-ethyl-2-hydroxy-3-oxobutanoate + NADPH + H(+). It participates in amino-acid biosynthesis; L-isoleucine biosynthesis; L-isoleucine from 2-oxobutanoate: step 2/4. Its pathway is amino-acid biosynthesis; L-valine biosynthesis; L-valine from pyruvate: step 2/4. In terms of biological role, involved in the biosynthesis of branched-chain amino acids (BCAA). Catalyzes an alkyl-migration followed by a ketol-acid reduction of (S)-2-acetolactate (S2AL) to yield (R)-2,3-dihydroxy-isovalerate. In the isomerase reaction, S2AL is rearranged via a Mg-dependent methyl migration to produce 3-hydroxy-3-methyl-2-ketobutyrate (HMKB). In the reductase reaction, this 2-ketoacid undergoes a metal-dependent reduction by NADPH to yield (R)-2,3-dihydroxy-isovalerate. This is Ketol-acid reductoisomerase (NADP(+)) from Clostridium beijerinckii (strain ATCC 51743 / NCIMB 8052) (Clostridium acetobutylicum).